The following is a 552-amino-acid chain: 3-hydroxy-3-methylglutaryl-coenzyme A reductase 1 (552 aa).

Low complexity-rich tracts occupy residues 79-99 and 112-122; these read QHNQ…QQPQ and QQQQQQQQQQQ. The interval 79–138 is disordered; it reads QHNQQQQQKQQPSQDYIQQPQNDNNINSGKEQEQQQQQQQQQQQTPDITNQPTKTNKKIP. Positions 123–132 are enriched in polar residues; the sequence is TPDITNQPTK. The active-site Charge relay system is E237. The N-linked (GlcNAc...) asparagine glycan is linked to N288. Residue K369 is the Charge relay system of the active site. N375 carries an N-linked (GlcNAc...) asparagine glycan. D445 serves as the catalytic Charge relay system. H543 functions as the Proton donor in the catalytic mechanism.

It belongs to the HMG-CoA reductase family.

Its subcellular location is the endoplasmic reticulum membrane. It catalyses the reaction (R)-mevalonate + 2 NADP(+) + CoA = (3S)-3-hydroxy-3-methylglutaryl-CoA + 2 NADPH + 2 H(+). It participates in metabolic intermediate biosynthesis; (R)-mevalonate biosynthesis; (R)-mevalonate from acetyl-CoA: step 3/3. In terms of biological role, this transmembrane glycoprotein is involved in the control of cholesterol biosynthesis. It is the rate-limiting enzyme of the sterol biosynthesis. The protein is 3-hydroxy-3-methylglutaryl-coenzyme A reductase 1 (hmgA) of Dictyostelium discoideum (Social amoeba).